Here is a 797-residue protein sequence, read N- to C-terminus: Calcium-transporting ATPase CtpE (797 aa).

3 consecutive transmembrane segments (helical) span residues 55–75, 215–235, and 254–274; these read LLLI…LLII, ILQF…YTQL, and VPMV…VGVV. The active-site 4-aspartylphosphate intermediate is D301. Mg(2+) contacts are provided by D301, T303, and D536. The next 6 membrane-spanning stretches (helical) occupy residues 601–621, 633–653, 667–687, 703–723, 729–749, and 764–784; these read TVYS…AIPL, IHVT…LSLA, VMTS…VTYL, ASTA…AVIA, WRLA…SLPL, and TSIA…MWWI.

It belongs to the cation transport ATPase (P-type) (TC 3.A.3) family.

The protein resides in the cell membrane. It carries out the reaction Ca(2+)(in) + ATP + H2O = Ca(2+)(out) + ADP + phosphate + H(+). Its function is as follows. P-type ATPase involved in specific uptake of calcium. The polypeptide is Calcium-transporting ATPase CtpE (ctpE) (Mycobacterium bovis (strain ATCC BAA-935 / AF2122/97)).